The following is a 688-amino-acid chain: GTPase IMAP family member 8 (688 aa).

A compositionally biased stretch (low complexity) spans 1–14 (MATSSHQGAAAGSQ). The disordered stretch occupies residues 1 to 42 (MATSSHQGAAAGSQAEHRSCEASVGQGERPSASQGQEGNFKQ). The span at 31 to 42 (SASQGQEGNFKQ) shows a compositional bias: polar residues. AIG1-type G domains follow at residues 46–247 (TSTL…MESS), 282–472 (MPEL…VIRE), and 473–677 (KELL…GQLK). The interval 55–62 (GKQGAGKS) is G1. GTP is bound by residues 55 to 63 (GKQGAGKSA) and Ser-76. Positions 82 to 86 (MVTDR) are G2. The segment at 103–106 (DTPD) is G3. Residues 172–175 (TRED) form a G4 region. GTP contacts are provided by residues 173-175 (RED) and Asn-209. The G5 stretch occupies residues 208–210 (NNK).

The protein belongs to the TRAFAC class TrmE-Era-EngA-EngB-Septin-like GTPase superfamily. AIG1/Toc34/Toc159-like paraseptin GTPase family. IAN subfamily. In terms of tissue distribution, abundantly expressed in the thymus (in thymocytes), spleen (in splenocytes), lymph node, followed by bone marrow and lung.

It localises to the endoplasmic reticulum. The protein resides in the golgi apparatus. Its subcellular location is the mitochondrion. The protein localises to the cytoplasm. It is found in the cytosol. Exerts an anti-apoptotic effect in the immune system and is involved in responses to infections. This Mus musculus (Mouse) protein is GTPase IMAP family member 8 (Gimap8).